Consider the following 180-residue polypeptide: MYQKDLYDLQIDLVFKCNDFSNLSNHFINKSDNIIFESGFWEEVLLCWIKIILDEKDTSFPNFILYKKSFSLSLQIINDNEISSINQKWMNKSGSTDVLSFPIISDEDTTKDLNFIELGDLFISLETAFKQSLEFNHSIKKEMLWLASHGLLHLLGWEHNDDYELDNMLNFQEYLISKLD.

Positions 149, 153, and 159 each coordinate Zn(2+).

It belongs to the endoribonuclease YbeY family. Zn(2+) serves as cofactor.

Its subcellular location is the cytoplasm. In terms of biological role, single strand-specific metallo-endoribonuclease involved in late-stage 70S ribosome quality control and in maturation of the 3' terminus of the 16S rRNA. The sequence is that of Endoribonuclease YbeY from Prochlorococcus marinus subsp. pastoris (strain CCMP1986 / NIES-2087 / MED4).